We begin with the raw amino-acid sequence, 432 residues long: D-amino acid dehydrogenase (432 aa).

Residue 3–17 coordinates FAD; the sequence is VLVLGSGVIGTASAY.

Belongs to the DadA oxidoreductase family. It depends on FAD as a cofactor.

The catalysed reaction is a D-alpha-amino acid + A + H2O = a 2-oxocarboxylate + AH2 + NH4(+). The protein operates within amino-acid degradation; D-alanine degradation; NH(3) and pyruvate from D-alanine: step 1/1. In terms of biological role, oxidative deamination of D-amino acids. This chain is D-amino acid dehydrogenase, found in Ectopseudomonas mendocina (strain ymp) (Pseudomonas mendocina).